A 164-amino-acid chain; its full sequence is Peptidyl-prolyl cis-trans isomerase A-like 4G (164 aa).

The PPIase cyclophilin-type domain maps to 7 to 163; the sequence is FFDITVDGKP…KKITIADCGQ (157 aa).

This sequence belongs to the cyclophilin-type PPIase family. PPIase A subfamily.

It localises to the cytoplasm. The catalysed reaction is [protein]-peptidylproline (omega=180) = [protein]-peptidylproline (omega=0). Functionally, PPIases accelerate the folding of proteins. It catalyzes the cis-trans isomerization of proline imidic peptide bonds in oligopeptides. The chain is Peptidyl-prolyl cis-trans isomerase A-like 4G (PPIAL4G) from Homo sapiens (Human).